A 101-amino-acid chain; its full sequence is MAKKSKIAKNDRRQETVARYATRRAELTEIIRRPSTPEAERRAAQQELRRQPRDASATRVRNRDSVDGRPRGYHRAFGLSRVNLREQAHAGFLPGVRKSSW.

Disordered regions lie at residues 1–20 and 28–72; these read MAKKSKIAKNDRRQETVARY and TEII…RPRG. Composition is skewed to basic and acidic residues over residues 38–53 and 61–70; these read EAERRAAQQELRRQPR and RNRDSVDGRP.

Belongs to the universal ribosomal protein uS14 family. As to quaternary structure, part of the 30S ribosomal subunit. Contacts proteins S3 and S10.

Functionally, binds 16S rRNA, required for the assembly of 30S particles and may also be responsible for determining the conformation of the 16S rRNA at the A site. The protein is Small ribosomal subunit protein uS14A of Streptomyces avermitilis (strain ATCC 31267 / DSM 46492 / JCM 5070 / NBRC 14893 / NCIMB 12804 / NRRL 8165 / MA-4680).